A 168-amino-acid chain; its full sequence is Iron-sulfur cluster assembly enzyme ISCU (168 aa).

The N-terminal 35 residues, 1 to 35 (MAAATGAGRLRRAASALLLRSPRLPARELSAPARL), are a transit peptide targeting the mitochondrion. Ser15 is modified (phosphoserine). Cys70 acts as the Cysteine persulfide intermediate in catalysis. Cys70 bears the Cysteine persulfide mark. Asp72, Cys96, and Cys139 together coordinate Zn(2+). The Cysteine persulfide intermediate role is filled by Cys139. Cys139 is subject to Cysteine persulfide.

It belongs to the NifU family. As to quaternary structure, homodimer; Tyr-36-mediated dimerization of two iron- and sulfide-containing ISCU subunit bind to the cysteine desulfurase complex. Component of the mitochondrial core iron-sulfur cluster (ISC) complex composed of NFS1, LYRM4, NDUFAB1, ISCU, FXN, and FDX2; this complex is a heterohexamer containing two copies of each monomer. Interacts (D-state) with NFS1 (homodimer form); each monomer interacts with the C-terminal regions of each NFS1 monomer. Interacts (monomer form) with FXN (via ferrous form); the interaction is possible when both are bound to the dimeric form of the cysteine desulfurase complex (NFS1:LYRM4) and enhances FXN interaction to the dimeric form of the cysteine desulfurase complex (NFS1:LYRM4). Interacts with GLRX5. Interacts (D-state) with HSPA9. Interacts (S-state) with HSCB; this interaction stimulates the ATPase activity of HSPA9. Component of a complex composed of FXN, NFS1, LYRM4 and ISCU. In terms of processing, cysteine persulfide is reduced by thiol-containing molecules such as glutathione and L-cysteine. Post-translationally, phosphorylation at Ser-15 is required for ISCU protein stabilization in the cytosol, whereas dephosphorylation of Ser-15, due to the inhibition of mTORC1 (mammalian target of rapamycin complex 1) complex, leads to degradation of the precursor form and ultimately to a decrease in the mitochondrial mature form.

The protein resides in the mitochondrion. Functionally, mitochondrial scaffold protein, of the core iron-sulfur cluster (ISC) assembly complex, that provides the structural architecture on which the [2Fe-2S] clusters are assembled. The core iron-sulfur cluster (ISC) assembly complex is involved in the de novo synthesis of a [2Fe-2S] cluster, the first step of the mitochondrial iron-sulfur protein biogenesis. This process is initiated by the cysteine desulfurase complex (NFS1:LYRM4:NDUFAB1) that produces persulfide which is delivered on the scaffold protein ISCU in a FXN-dependent manner. Then this complex is stabilized by FDX2 which provides reducing equivalents to accomplish the [2Fe-2S] cluster assembly. Finally, the [2Fe-2S] cluster is transferred from ISCU to chaperone proteins, including HSCB, HSPA9 and GLRX5. Exists as two slow interchanging conformational states, a structured (S) and disordered (D) form. May modulate NFS1 desulfurase activity in a zinc-dependent manner. Modulates the interaction between FXN and the cysteine desulfurase complex. This chain is Iron-sulfur cluster assembly enzyme ISCU, found in Mus musculus (Mouse).